Here is a 156-residue protein sequence, read N- to C-terminus: Small ribosomal subunit protein uS7 (156 aa).

This sequence belongs to the universal ribosomal protein uS7 family. In terms of assembly, part of the 30S ribosomal subunit. Contacts proteins S9 and S11.

Its function is as follows. One of the primary rRNA binding proteins, it binds directly to 16S rRNA where it nucleates assembly of the head domain of the 30S subunit. Is located at the subunit interface close to the decoding center, probably blocks exit of the E-site tRNA. The polypeptide is Small ribosomal subunit protein uS7 (Bartonella quintana (strain Toulouse) (Rochalimaea quintana)).